Consider the following 311-residue polypeptide: Pyrimidine-specific ribonucleoside hydrolase RihA (311 aa).

Residue His-240 is part of the active site.

Belongs to the IUNH family. RihA subfamily.

Functionally, hydrolyzes cytidine or uridine to ribose and cytosine or uracil, respectively. This Salmonella arizonae (strain ATCC BAA-731 / CDC346-86 / RSK2980) protein is Pyrimidine-specific ribonucleoside hydrolase RihA.